A 116-amino-acid polypeptide reads, in one-letter code: NADH-ubiquinone oxidoreductase chain 3 (116 aa).

3 consecutive transmembrane segments (helical) span residues 3 to 23 (LITT…TISF), 56 to 76 (FFLI…LLPL), and 87 to 107 (LTLI…IYEW).

This sequence belongs to the complex I subunit 3 family.

Its subcellular location is the mitochondrion membrane. It carries out the reaction a ubiquinone + NADH + 5 H(+)(in) = a ubiquinol + NAD(+) + 4 H(+)(out). Core subunit of the mitochondrial membrane respiratory chain NADH dehydrogenase (Complex I) that is believed to belong to the minimal assembly required for catalysis. Complex I functions in the transfer of electrons from NADH to the respiratory chain. The immediate electron acceptor for the enzyme is believed to be ubiquinone. This chain is NADH-ubiquinone oxidoreductase chain 3 (MT-ND3), found in Oncorhynchus mykiss (Rainbow trout).